The chain runs to 436 residues: GTPase Der (436 aa).

EngA-type G domains follow at residues 4 to 165 (NVIA…NFDS) and 172 to 347 (FKLS…ENLE). Residues 10 to 17 (GKPNVGKS), 57 to 61 (DTGGI), 119 to 122 (NKLD), 178 to 185 (GQPNSGKS), 225 to 229 (DTAGI), and 290 to 293 (NKWD) each bind GTP. Residues 348-432 (REIKPSVLTN…PINIIFKNKS (85 aa)) form the KH-like domain.

The protein belongs to the TRAFAC class TrmE-Era-EngA-EngB-Septin-like GTPase superfamily. EngA (Der) GTPase family. Associates with the 50S ribosomal subunit.

In terms of biological role, GTPase that plays an essential role in the late steps of ribosome biogenesis. This is GTPase Der from Mycoplasmopsis agalactiae (strain NCTC 10123 / CIP 59.7 / PG2) (Mycoplasma agalactiae).